Reading from the N-terminus, the 332-residue chain is L-lactate dehydrogenase A chain (332 aa).

Residues 29-57 and Arg99 contribute to the NAD(+) site; that span reads GAVGMACAISILMKDLADELALVDVVEDK. Residues Arg106, Asn138, and Arg169 each contribute to the substrate site. An NAD(+)-binding site is contributed by Asn138. His193 serves as the catalytic Proton acceptor. Thr248 contributes to the substrate binding site.

Belongs to the LDH/MDH superfamily. LDH family. Homotetramer.

It localises to the cytoplasm. The enzyme catalyses (S)-lactate + NAD(+) = pyruvate + NADH + H(+). The protein operates within fermentation; pyruvate fermentation to lactate; (S)-lactate from pyruvate: step 1/1. In terms of biological role, interconverts simultaneously and stereospecifically pyruvate and lactate with concomitant interconversion of NADH and NAD(+). This chain is L-lactate dehydrogenase A chain (LDHA), found in Python regius (Ball python).